The chain runs to 54 residues: Large ribosomal subunit protein bL33A (54 aa).

It belongs to the bacterial ribosomal protein bL33 family.

This chain is Large ribosomal subunit protein bL33A, found in Saccharopolyspora erythraea (strain ATCC 11635 / DSM 40517 / JCM 4748 / NBRC 13426 / NCIMB 8594 / NRRL 2338).